Consider the following 723-residue polypeptide: Probable dipeptidyl-peptidase 5 (723 aa).

A signal peptide spans 1–19 (MAALRWLSAVVAVSTTVLA). N-linked (GlcNAc...) asparagine glycosylation is found at N79, N97, N154, N255, N381, and N451. S561 serves as the catalytic Charge relay system. N608 is a glycosylation site (N-linked (GlcNAc...) asparagine). Active-site charge relay system residues include D644 and H676.

It belongs to the peptidase S9C family.

The protein resides in the secreted. Extracellular dipeptidyl-peptidase which removes N-terminal dipeptides sequentially from polypeptides having unsubstituted N-termini. This chain is Probable dipeptidyl-peptidase 5 (dpp5), found in Aspergillus terreus (strain NIH 2624 / FGSC A1156).